We begin with the raw amino-acid sequence, 97 residues long: Large ribosomal subunit protein bL27 (97 aa).

The propeptide occupies 1-12; it reads MLKMNLANLQLF. A disordered region spans residues 14-37; the sequence is HKKGGGSTSNGRDSQAKRLGAKAA.

Belongs to the bacterial ribosomal protein bL27 family. In terms of processing, the N-terminus is cleaved by ribosomal processing cysteine protease Prp.

In Streptococcus gordonii (strain Challis / ATCC 35105 / BCRC 15272 / CH1 / DL1 / V288), this protein is Large ribosomal subunit protein bL27.